We begin with the raw amino-acid sequence, 337 residues long: Phenylalanine--tRNA ligase alpha subunit (337 aa).

Residue E258 participates in Mg(2+) binding.

It belongs to the class-II aminoacyl-tRNA synthetase family. Phe-tRNA synthetase alpha subunit type 1 subfamily. Tetramer of two alpha and two beta subunits. The cofactor is Mg(2+).

It localises to the cytoplasm. The enzyme catalyses tRNA(Phe) + L-phenylalanine + ATP = L-phenylalanyl-tRNA(Phe) + AMP + diphosphate + H(+). The protein is Phenylalanine--tRNA ligase alpha subunit of Burkholderia vietnamiensis (strain G4 / LMG 22486) (Burkholderia cepacia (strain R1808)).